The sequence spans 338 residues: Anthranilate phosphoribosyltransferase (338 aa).

5-phospho-alpha-D-ribose 1-diphosphate is bound by residues G81, 84 to 85 (GD), S89, 91 to 94 (NVST), 109 to 117 (KHGNRALSS), and A121. Residue G81 coordinates anthranilate. S93 is a Mg(2+) binding site. N112 is an anthranilate binding site. R167 is a binding site for anthranilate. The Mg(2+) site is built by D226 and E227.

The protein belongs to the anthranilate phosphoribosyltransferase family. Homodimer. It depends on Mg(2+) as a cofactor.

The enzyme catalyses N-(5-phospho-beta-D-ribosyl)anthranilate + diphosphate = 5-phospho-alpha-D-ribose 1-diphosphate + anthranilate. Its pathway is amino-acid biosynthesis; L-tryptophan biosynthesis; L-tryptophan from chorismate: step 2/5. In terms of biological role, catalyzes the transfer of the phosphoribosyl group of 5-phosphorylribose-1-pyrophosphate (PRPP) to anthranilate to yield N-(5'-phosphoribosyl)-anthranilate (PRA). This Rhodopseudomonas palustris (strain HaA2) protein is Anthranilate phosphoribosyltransferase.